The following is a 429-amino-acid chain: Mannose-6-phosphate isomerase (429 aa).

Zn(2+) contacts are provided by Gln-109, His-111, Glu-136, and His-281. Arg-300 is a catalytic residue.

The protein belongs to the mannose-6-phosphate isomerase type 1 family. Zn(2+) serves as cofactor.

Its subcellular location is the cytoplasm. It catalyses the reaction D-mannose 6-phosphate = D-fructose 6-phosphate. It functions in the pathway nucleotide-sugar biosynthesis; GDP-alpha-D-mannose biosynthesis; alpha-D-mannose 1-phosphate from D-fructose 6-phosphate: step 1/2. Involved in the synthesis of the GDP-mannose and dolichol-phosphate-mannose required for a number of critical mannosyl transfer reactions. The polypeptide is Mannose-6-phosphate isomerase (PMI1) (Eremothecium gossypii (strain ATCC 10895 / CBS 109.51 / FGSC 9923 / NRRL Y-1056) (Yeast)).